The primary structure comprises 802 residues: Post-transcriptional regulator mkt1 (802 aa).

A phosphoserine mark is found at serine 227, serine 228, and serine 230.

Belongs to the XPG/RAD2 endonuclease family. In terms of assembly, interacts with pab1 binding protein ath1.

Involved in post-transcriptional regulation of gene expression by 3'-UTR-mediated RNA regulation. Promotes interactions between mRNA and poly(A)-binding protein. Binds the 3' UTR of mRNAs, centromeric transcripts and antisense-rDNA. Required for the establishment but not the maintenance of heterochromatin at pericentromeres, and for the maintenance of small domains of facultative heterochromatin known as HOODs. The sequence is that of Post-transcriptional regulator mkt1 from Schizosaccharomyces pombe (strain 972 / ATCC 24843) (Fission yeast).